The following is a 91-amino-acid chain: Elongation factor 1-beta (91 aa).

It belongs to the EF-1-beta/EF-1-delta family.

Its function is as follows. Promotes the exchange of GDP for GTP in EF-1-alpha/GDP, thus allowing the regeneration of EF-1-alpha/GTP that could then be used to form the ternary complex EF-1-alpha/GTP/AAtRNA. This is Elongation factor 1-beta from Thermococcus kodakarensis (strain ATCC BAA-918 / JCM 12380 / KOD1) (Pyrococcus kodakaraensis (strain KOD1)).